Reading from the N-terminus, the 586-residue chain is Phosphomethylpyrimidine synthase (586 aa).

The disordered stretch occupies residues 1 to 59; the sequence is MKQSVSAEQIELKSSLPGSKKVYVDGPREGMKVPMREIEQSETNGVPNPPIRVYDTSGP. Basic and acidic residues predominate over residues 22-39; the sequence is VYVDGPREGMKVPMREIE. Substrate is bound by residues N193, M222, Y251, H287, 307–309, 348–351, and E387; these read SRG and DGLR. H391 is a Zn(2+) binding site. Y414 provides a ligand contact to substrate. Position 455 (H455) interacts with Zn(2+). [4Fe-4S] cluster is bound by residues C535, C538, and C543.

Belongs to the ThiC family. It depends on [4Fe-4S] cluster as a cofactor.

The catalysed reaction is 5-amino-1-(5-phospho-beta-D-ribosyl)imidazole + S-adenosyl-L-methionine = 4-amino-2-methyl-5-(phosphooxymethyl)pyrimidine + CO + 5'-deoxyadenosine + formate + L-methionine + 3 H(+). Its pathway is cofactor biosynthesis; thiamine diphosphate biosynthesis. Catalyzes the synthesis of the hydroxymethylpyrimidine phosphate (HMP-P) moiety of thiamine from aminoimidazole ribotide (AIR) in a radical S-adenosyl-L-methionine (SAM)-dependent reaction. The sequence is that of Phosphomethylpyrimidine synthase from Bacillus cereus (strain ATCC 14579 / DSM 31 / CCUG 7414 / JCM 2152 / NBRC 15305 / NCIMB 9373 / NCTC 2599 / NRRL B-3711).